The chain runs to 327 residues: 2-keto-3-deoxygluconate permease (327 aa).

Transmembrane regions (helical) follow at residues 10–30 (IPGGMMLVPLFLGALCHTFSP), 42–62 (GMITGTVPILAVWFFCMGASI), 73–93 (KSGTLVVTKIAVAWVVAAIAS), 95–115 (IIPEHGVEVGFFAGLSTLALV), 139–159 (AGAFVLMSLESGPLMTMIILG), 163–183 (IASFEPHVFVGAVLPFLVGFA), 199–219 (VQTLIPFFAFALGNTIDLTVI), 224–244 (LLGILLGVAVIIVTGIPLIIA), 254–274 (TAGIAASSSAGAAVATPVLIA), and 289–309 (SLVATAVIVTSILVPIITSIW).

It belongs to the KdgT transporter family.

Its subcellular location is the cell inner membrane. It catalyses the reaction 2-dehydro-3-deoxy-D-gluconate(in) + H(+)(in) = 2-dehydro-3-deoxy-D-gluconate(out) + H(+)(out). Functionally, catalyzes the proton-dependent uptake of 2-keto-3-deoxygluconate (KDG) into the cell. The protein is 2-keto-3-deoxygluconate permease of Escherichia coli O139:H28 (strain E24377A / ETEC).